The following is a 103-amino-acid chain: Large ribosomal subunit protein bL21 (103 aa).

It belongs to the bacterial ribosomal protein bL21 family. In terms of assembly, part of the 50S ribosomal subunit. Contacts protein L20.

This protein binds to 23S rRNA in the presence of protein L20. The sequence is that of Large ribosomal subunit protein bL21 from Pseudomonas syringae pv. syringae (strain B728a).